The chain runs to 164 residues: Endoribonuclease YbeY (164 aa).

Zn(2+) is bound by residues H130, H134, and H140.

This sequence belongs to the endoribonuclease YbeY family. Requires Zn(2+) as cofactor.

The protein resides in the cytoplasm. Its function is as follows. Single strand-specific metallo-endoribonuclease involved in late-stage 70S ribosome quality control and in maturation of the 3' terminus of the 16S rRNA. The sequence is that of Endoribonuclease YbeY from Streptococcus mutans serotype c (strain ATCC 700610 / UA159).